Reading from the N-terminus, the 370-residue chain is Histidinol-phosphate aminotransferase 1 (370 aa).

K222 bears the N6-(pyridoxal phosphate)lysine mark.

Belongs to the class-II pyridoxal-phosphate-dependent aminotransferase family. Histidinol-phosphate aminotransferase subfamily. Homodimer. Pyridoxal 5'-phosphate is required as a cofactor.

It carries out the reaction L-histidinol phosphate + 2-oxoglutarate = 3-(imidazol-4-yl)-2-oxopropyl phosphate + L-glutamate. It functions in the pathway amino-acid biosynthesis; L-histidine biosynthesis; L-histidine from 5-phospho-alpha-D-ribose 1-diphosphate: step 7/9. The sequence is that of Histidinol-phosphate aminotransferase 1 (hisC1) from Bacillus cereus (strain ATCC 14579 / DSM 31 / CCUG 7414 / JCM 2152 / NBRC 15305 / NCIMB 9373 / NCTC 2599 / NRRL B-3711).